Consider the following 465-residue polypeptide: Ribulose bisphosphate carboxylase large chain (465 aa).

At K4 the chain carries N6,N6,N6-trimethyllysine. The substrate site is built by N113 and T163. Catalysis depends on K165, which acts as the Proton acceptor. K167 provides a ligand contact to substrate. Mg(2+)-binding residues include K191, D193, and E194. N6-carboxylysine is present on K191. The active-site Proton acceptor is the H284. Substrate contacts are provided by R285, H317, and S369.

Belongs to the RuBisCO large chain family. Type I subfamily. As to quaternary structure, heterohexadecamer of 8 large chains and 8 small chains; disulfide-linked. The disulfide link is formed within the large subunit homodimers. The cofactor is Mg(2+). Post-translationally, the disulfide bond which can form in the large chain dimeric partners within the hexadecamer appears to be associated with oxidative stress and protein turnover.

The protein localises to the plastid. It localises to the chloroplast. It carries out the reaction 2 (2R)-3-phosphoglycerate + 2 H(+) = D-ribulose 1,5-bisphosphate + CO2 + H2O. It catalyses the reaction D-ribulose 1,5-bisphosphate + O2 = 2-phosphoglycolate + (2R)-3-phosphoglycerate + 2 H(+). Its function is as follows. RuBisCO catalyzes two reactions: the carboxylation of D-ribulose 1,5-bisphosphate, the primary event in carbon dioxide fixation, as well as the oxidative fragmentation of the pentose substrate in the photorespiration process. Both reactions occur simultaneously and in competition at the same active site. This is Ribulose bisphosphate carboxylase large chain from Acer saccharum (Sugar maple).